The chain runs to 312 residues: Porphobilinogen deaminase (312 aa).

An S-(dipyrrolylmethanemethyl)cysteine modification is found at C235.

It belongs to the HMBS family. Monomer. Requires dipyrromethane as cofactor.

The catalysed reaction is 4 porphobilinogen + H2O = hydroxymethylbilane + 4 NH4(+). The protein operates within porphyrin-containing compound metabolism; protoporphyrin-IX biosynthesis; coproporphyrinogen-III from 5-aminolevulinate: step 2/4. In terms of biological role, tetrapolymerization of the monopyrrole PBG into the hydroxymethylbilane pre-uroporphyrinogen in several discrete steps. This Mycolicibacterium gilvum (strain PYR-GCK) (Mycobacterium gilvum (strain PYR-GCK)) protein is Porphobilinogen deaminase.